The primary structure comprises 436 residues: MFFKLLKDAFKIKQVRSKILFTIFIILVFRIGTTITVPGVNAKSLEALSGLSFLNMLSLVSGNAMKNFSVFALGVSPYITASIVVQLLQMDLLPKFVEWGKQGEVGRRKLNQATRYISLALAFVQSIGITAGFNALSSTKLVAAPNWQTYLFIGAVLTTGSMIVVWLGEQITDKGYGNGVSMIIFAGIVASIPEMVKGIYEDYFVNVPSDRLQSSIIFVACLIVAVLLIVYFTTYVQQAEYKIPIQYTKIAQGAPSSSYLPLKVNPAGVIPVIFASSITAAPAAVLQFLSASGNDWGWVRTAQSLLATTTPTGIAMYALLIILFTFFYTFVQINPEKAAENLQKSGAYIPGVRPGKGTEQFMSKLLRRLATVGSLFLGFISIIPIIAKDLFGLSDTVALGGTSLLIIIATGIEGMKQLEGYLLKRKYTGFMNTTTK.

A run of 10 helical transmembrane segments spans residues 19 to 39, 68 to 88, 116 to 136, 151 to 171, 179 to 199, 216 to 236, 269 to 289, 313 to 333, 372 to 392, and 395 to 415; these read ILFT…TVPG, FSVF…VQLL, YISL…FNAL, LFIG…GEQI, GVSM…VKGI, IIFV…TTYV, VIPV…LQFL, GIAM…FVQI, VGSL…DLFG, and DTVA…IEGM.

It belongs to the SecY/SEC61-alpha family. As to quaternary structure, component of the Sec protein translocase complex. Heterotrimer consisting of SecY, SecE and SecG subunits. The heterotrimers can form oligomers, although 1 heterotrimer is thought to be able to translocate proteins. Interacts with the ribosome. Interacts with SecDF, and other proteins may be involved. Interacts with SecA.

It localises to the cell membrane. Functionally, the central subunit of the protein translocation channel SecYEG. Consists of two halves formed by TMs 1-5 and 6-10. These two domains form a lateral gate at the front which open onto the bilayer between TMs 2 and 7, and are clamped together by SecE at the back. The channel is closed by both a pore ring composed of hydrophobic SecY resides and a short helix (helix 2A) on the extracellular side of the membrane which forms a plug. The plug probably moves laterally to allow the channel to open. The ring and the pore may move independently. The chain is Protein translocase subunit SecY from Streptococcus gordonii (strain Challis / ATCC 35105 / BCRC 15272 / CH1 / DL1 / V288).